The chain runs to 78 residues: Defensin-like protein 171 (78 aa).

The signal sequence occupies residues 1-23; the sequence is MAKTASSLVLPIIFLVMFALVEQ. Intrachain disulfides connect C27–C71, C34–C56, C40–C65, and C44–C67.

The protein belongs to the DEFL family.

The protein resides in the secreted. This is Defensin-like protein 171 (LCR61) from Arabidopsis thaliana (Mouse-ear cress).